Consider the following 252-residue polypeptide: Aquaporin TIP4-4 (252 aa).

Transmembrane regions (helical) follow at residues 20–40 (AVLA…GSAM) and 53–73 (VVGL…MVSA). The NPA 1 motif lies at 83 to 85 (NPA). Helical transmembrane passes span 105-125 (VAAQ…LAVA), 143-163 (GVLM…ATVV), and 168-188 (AVGG…VLAG). The NPA 2 motif lies at 197–199 (NPA). A helical membrane pass occupies residues 216–236 (VYWVGPLIGGPLAGLVYDGLF).

This sequence belongs to the MIP/aquaporin (TC 1.A.8) family. TIP (TC 1.A.8.10) subfamily.

The protein resides in the vacuole membrane. Its function is as follows. Aquaporins facilitate the transport of water and small neutral solutes across cell membranes. The sequence is that of Aquaporin TIP4-4 (TIP4-4) from Zea mays (Maize).